Here is a 211-residue protein sequence, read N- to C-terminus: Small ribosomal subunit protein uS3 (211 aa).

The region spanning 38–106 (LRKFIKKAFY…NIELNIIEVK (69 aa)) is the KH type-2 domain.

This sequence belongs to the universal ribosomal protein uS3 family. As to quaternary structure, part of the 30S ribosomal subunit. Forms a tight complex with proteins S10 and S14.

Binds the lower part of the 30S subunit head. Binds mRNA in the 70S ribosome, positioning it for translation. The polypeptide is Small ribosomal subunit protein uS3 (Ehrlichia ruminantium (strain Welgevonden)).